The primary structure comprises 690 residues: Glutaminase A (690 aa).

An N-terminal signal peptide occupies residues 1 to 20 (MMHFLSFCLSVASLVSYAGA). 7 N-linked (GlcNAc...) asparagine glycosylation sites follow: asparagine 80, asparagine 96, asparagine 435, asparagine 508, asparagine 528, asparagine 538, and asparagine 571.

The protein belongs to the fungal glutaminase gtaA family.

Its subcellular location is the secreted. The catalysed reaction is L-glutamine + H2O = L-glutamate + NH4(+). With respect to regulation, activity is inhibited by about 80% in the presence of 18% sodium chloride. Its function is as follows. Glutaminase catalyzes the hydrolysis of glutamine to glutamic acid and plays a key role in nitrogen metabolism. Catalyzes the hydrolysis not only of L-glutamine but also of D-glutamine. The protein is Glutaminase A of Aspergillus oryzae (strain ATCC 42149 / RIB 40) (Yellow koji mold).